Reading from the N-terminus, the 189-residue chain is Resolvase (189 aa).

The Resolvase/invertase-type recombinase catalytic domain occupies 1 to 139 (MLVGYARVST…EGLKSAKARG (139 aa)). Ser9 functions as the O-(5'-phospho-DNA)-serine intermediate in the catalytic mechanism. A disordered region spans residues 130 to 151 (EGLKSAKARGRNGGRPSKRNDK). Positions 165-184 (IVDIVKQTGLSRATVYRVLN) form a DNA-binding region, H-T-H motif.

This sequence belongs to the site-specific recombinase resolvase family.

In terms of biological role, a likely role for the res protein would be to stabilize pIP404 by reducing the number of plasmid multimers resulting from homologous recombination. This is Resolvase (res) from Clostridium perfringens.